We begin with the raw amino-acid sequence, 536 residues long: Pentatricopeptide repeat-containing protein At2g06000 (536 aa).

PPR repeat units lie at residues 102–136 (SFWT…GVSP), 137–167 (NNRL…SFEV), 170–200 (CCMV…HLRF), 205–239 (DTKT…GCEP), 240–274 (DIVT…SVCS), 276–310 (DVVT…GIYP), 311–345 (TNVT…GCFP), 346–380 (DVVT…GMFP), 381–415 (NAFT…DIIP), 416–450 (QPFM…KCKP), 451–485 (DKIT…GCSP), and 486–523 (DKIT…NVVP).

It belongs to the PPR family. P subfamily.

This Arabidopsis thaliana (Mouse-ear cress) protein is Pentatricopeptide repeat-containing protein At2g06000.